Here is a 33-residue protein sequence, read N- to C-terminus: Photosystem II reaction center protein Psb30 (33 aa).

The helical transmembrane segment at 5–25 (VILQLGSILLVVAAGPLVIVL) threads the bilayer.

It belongs to the Psb30/Ycf12 family. In terms of assembly, PSII is composed of 1 copy each of membrane proteins PsbA, PsbB, PsbC, PsbD, PsbE, PsbF, PsbH, PsbI, PsbJ, PsbK, PsbL, PsbM, PsbT, PsbX, PsbY, PsbZ, Psb30/Ycf12, peripheral proteins of the oxygen-evolving complex and a large number of cofactors. It forms dimeric complexes.

The protein resides in the plastid. It localises to the chloroplast thylakoid membrane. In terms of biological role, a core subunit of photosystem II (PSII), probably helps stabilize the reaction center. This is Photosystem II reaction center protein Psb30 from Oltmannsiellopsis viridis (Marine flagellate).